Reading from the N-terminus, the 115-residue chain is Large ribosomal subunit protein uL22 (115 aa).

This sequence belongs to the universal ribosomal protein uL22 family. Part of the 50S ribosomal subunit.

Functionally, this protein binds specifically to 23S rRNA; its binding is stimulated by other ribosomal proteins, e.g. L4, L17, and L20. It is important during the early stages of 50S assembly. It makes multiple contacts with different domains of the 23S rRNA in the assembled 50S subunit and ribosome. In terms of biological role, the globular domain of the protein is located near the polypeptide exit tunnel on the outside of the subunit, while an extended beta-hairpin is found that lines the wall of the exit tunnel in the center of the 70S ribosome. The polypeptide is Large ribosomal subunit protein uL22 (Nitrosospira multiformis (strain ATCC 25196 / NCIMB 11849 / C 71)).